We begin with the raw amino-acid sequence, 387 residues long: Xylose isomerase (387 aa).

Active-site residues include His-53 and Asp-56. Mg(2+)-binding residues include Glu-180, Glu-216, His-219, Asp-244, Asp-254, Asp-256, and Asp-286.

The protein belongs to the xylose isomerase family. Homotetramer. Requires Mg(2+) as cofactor.

The protein localises to the cytoplasm. It catalyses the reaction alpha-D-xylose = alpha-D-xylulofuranose. The protein is Xylose isomerase (xylA) of Thermus caldophilus.